The following is a 1187-amino-acid chain: ATP-dependent DNA helicase MER3 (1187 aa).

The segment at 1 to 41 is disordered; the sequence is MKTKFDRLGTGKRSRPSPNNIDFNDQSATFKRNKKNSRQPS. Residues 16–30 show a composition bias toward polar residues; the sequence is PSPNNIDFNDQSATF. Residues 148–322 form the Helicase ATP-binding domain; sequence PSIYESNENC…WLKTNNELPA (175 aa). Residue 161–168 participates in ATP binding; the sequence is SPTGSGKT. Residues 268-271 carry the DEIH box motif; it reads DEIH. The Helicase C-terminal domain maps to 360 to 542; that stretch reads KLIEIIEKHA…NLIEHLAAET (183 aa). The SEC63 domain occupies 616-922; sequence STAYGNAMTR…PKLEKIEFSI (307 aa). Residues 1039-1054 form a C4-type zinc finger; the sequence is CFHSCKDKTQCRHLCC. The segment at 1146–1187 is disordered; that stretch reads NCPEIIPIDLESSDSYSSNTAASSISDPNGDLDFLGSDIEFE. A compositionally biased stretch (low complexity) spans 1158–1171; that stretch reads SDSYSSNTAASSIS.

Belongs to the helicase family. SKI2 subfamily. Oligomerizes. A divalent metal cation is required as a cofactor. It depends on Zn(2+) as a cofactor.

Its subcellular location is the nucleus. It carries out the reaction Couples ATP hydrolysis with the unwinding of duplex DNA by translocating in the 3'-5' direction.. The enzyme catalyses ATP + H2O = ADP + phosphate + H(+). DNA-dependent ATPase and 3'-5' DNA helicase. Required in the control of double strand break transition and crossover during meiosis. ATPase is slightly better stimulated by single-stranded (ss) than double-stranded (ds)DNA. Unwinds Holliday junction (HJ) DNA to Y-DNA and to ssDNA. Efficient unwinding requires 6 nucleotides of 3'-ssDNA; seems to initiate unwinding from blunt ends when they open slightly. Binds HJ, dsDNA, ssDNA and 3'- and 5-overhang DNA. The chain is ATP-dependent DNA helicase MER3 from Saccharomyces cerevisiae (strain ATCC 204508 / S288c) (Baker's yeast).